Consider the following 435-residue polypeptide: Succinate--CoA ligase [ADP-forming] subunit beta, mitochondrial (435 aa).

The transit peptide at 1-20 (MIGRISQPLLNTSQKFMAPA) directs the protein to the mitochondrion. In terms of domain architecture, ATP-grasp spans 32 to 259 (MKILQNYEIK…SNAEFRQAKL (228 aa)). Residues Lys69 and 76 to 78 (GRG) contribute to the ATP site. Mg(2+)-binding residues include Asn229 and Asp243. Substrate-binding positions include Asn294 and 352–354 (GIM).

Belongs to the succinate/malate CoA ligase beta subunit family. ATP-specific subunit beta subfamily. As to quaternary structure, heterodimer of an alpha and a beta subunit. The beta subunit determines specificity for ATP. The cofactor is Mg(2+).

The protein localises to the mitochondrion. It carries out the reaction succinate + ATP + CoA = succinyl-CoA + ADP + phosphate. The protein operates within carbohydrate metabolism; tricarboxylic acid cycle; succinate from succinyl-CoA (ligase route): step 1/1. ATP-specific succinyl-CoA synthetase functions in the citric acid cycle (TCA), coupling the hydrolysis of succinyl-CoA to the synthesis of ATP and thus represents the only step of substrate-level phosphorylation in the TCA. The beta subunit provides nucleotide specificity of the enzyme and binds the substrate succinate, while the binding sites for coenzyme A and phosphate are found in the alpha subunit. This chain is Succinate--CoA ligase [ADP-forming] subunit beta, mitochondrial, found in Caenorhabditis elegans.